We begin with the raw amino-acid sequence, 144 residues long: Transcription antitermination protein NusB (144 aa).

The protein belongs to the NusB family.

Involved in transcription antitermination. Required for transcription of ribosomal RNA (rRNA) genes. Binds specifically to the boxA antiterminator sequence of the ribosomal RNA (rrn) operons. This is Transcription antitermination protein NusB from Histophilus somni (strain 2336) (Haemophilus somnus).